The following is a 77-amino-acid chain: U9-lycotoxin-Ls1a (77 aa).

A signal peptide spans 1-20 (MKLLLFTALVLVVIVSLIEA). A propeptide spanning residues 21–26 (EAENER) is cleaved from the precursor.

Belongs to the neurotoxin 19 (CSTX) family. 08 (U8-Lctx) subfamily. Post-translationally, contains 4 disulfide bonds. Expressed by the venom gland.

The protein resides in the secreted. The protein is U9-lycotoxin-Ls1a of Lycosa singoriensis (Wolf spider).